Here is a 1043-residue protein sequence, read N- to C-terminus: Peroxisomal ATPase PEX1 (1043 aa).

The AAA-cassette D1 stretch occupies residues 453-626; the sequence is ATPAIILDGK…SKNQIMKLNR (174 aa). ATP is bound by residues 461 to 468 and 738 to 745; these read GKQGIGKT and GYPGCGKT. Residues 733–926 form an AAA-cassette D2 region; that stretch reads GILLYGYPGC…CYNAYLKSVH (194 aa).

This sequence belongs to the AAA ATPase family. In terms of assembly, interacts with PEX6; forming the PEX1-PEX6 AAA ATPase complex, which is composed of a heterohexamer formed by a trimer of PEX1-PEX6 dimers. The PEX1-PEX6 heterooligomers associate with the peroxisomal importomer via interaction of PEX6 with the peroxisomal membrane anchor PEX15.

Its subcellular location is the cytoplasm. The protein localises to the cytosol. It localises to the peroxisome membrane. It carries out the reaction ATP + H2O = ADP + phosphate + H(+). In terms of biological role, component of the PEX1-PEX6 AAA ATPase complex, a protein dislocase complex that mediates the ATP-dependent extraction of the PEX5 receptor from peroxisomal membranes, an essential step for PEX5 recycling. Specifically recognizes PEX5 monoubiquitinated at 'Cys-6', and pulls it out of the peroxisome lumen through the PEX2-PEX10-PEX12 retrotranslocation channel. Extraction by the PEX1-PEX6 AAA ATPase complex is accompanied by unfolding of the TPR repeats and release of bound cargo from PEX5. The chain is Peroxisomal ATPase PEX1 from Saccharomyces cerevisiae (strain ATCC 204508 / S288c) (Baker's yeast).